The following is a 202-amino-acid chain: Shikimate kinase (202 aa).

20–25 (GSGKST) is a binding site for ATP. Serine 24 contributes to the Mg(2+) binding site. Substrate-binding residues include aspartate 42, arginine 66, and glycine 88. Residue arginine 126 participates in ATP binding. Position 153 (arginine 153) interacts with substrate.

This sequence belongs to the shikimate kinase family. Monomer. Mg(2+) serves as cofactor.

It is found in the cytoplasm. The enzyme catalyses shikimate + ATP = 3-phosphoshikimate + ADP + H(+). It participates in metabolic intermediate biosynthesis; chorismate biosynthesis; chorismate from D-erythrose 4-phosphate and phosphoenolpyruvate: step 5/7. Catalyzes the specific phosphorylation of the 3-hydroxyl group of shikimic acid using ATP as a cosubstrate. The sequence is that of Shikimate kinase from Chlorobium luteolum (strain DSM 273 / BCRC 81028 / 2530) (Pelodictyon luteolum).